The primary structure comprises 172 residues: MEYFNVGKIVNTQGLQGEMRVLSVSDFAEERFKKGSQLALFDDKDRFVQEVTIVSHRKQKHFDIIKLKDMYHINAIEKYKGYTLKVSKDNQGDLQEGEFYYHQIIGMAVYEKDRLIGYVKEILQPGANDVWVVKRQGKRDLLLPYIPPVVLNVDVPNKRVDVELMEGLDDED.

The PRC barrel domain occupies 96-168; sequence EGEFYYHQII…RVDVELMEGL (73 aa).

It belongs to the RimM family. In terms of assembly, binds ribosomal protein uS19.

The protein localises to the cytoplasm. An accessory protein needed during the final step in the assembly of 30S ribosomal subunit, possibly for assembly of the head region. Essential for efficient processing of 16S rRNA. May be needed both before and after RbfA during the maturation of 16S rRNA. It has affinity for free ribosomal 30S subunits but not for 70S ribosomes. This Streptococcus pyogenes serotype M3 (strain ATCC BAA-595 / MGAS315) protein is Ribosome maturation factor RimM.